The following is a 251-amino-acid chain: 3-deoxy-manno-octulosonate cytidylyltransferase (251 aa).

It belongs to the KdsB family.

Its subcellular location is the cytoplasm. The catalysed reaction is 3-deoxy-alpha-D-manno-oct-2-ulosonate + CTP = CMP-3-deoxy-beta-D-manno-octulosonate + diphosphate. The protein operates within nucleotide-sugar biosynthesis; CMP-3-deoxy-D-manno-octulosonate biosynthesis; CMP-3-deoxy-D-manno-octulosonate from 3-deoxy-D-manno-octulosonate and CTP: step 1/1. It functions in the pathway bacterial outer membrane biogenesis; lipopolysaccharide biosynthesis. In terms of biological role, activates KDO (a required 8-carbon sugar) for incorporation into bacterial lipopolysaccharide in Gram-negative bacteria. The protein is 3-deoxy-manno-octulosonate cytidylyltransferase of Vibrio vulnificus (strain YJ016).